Here is a 175-residue protein sequence, read N- to C-terminus: Large ribosomal subunit protein uL10 (175 aa).

Belongs to the universal ribosomal protein uL10 family. Part of the ribosomal stalk of the 50S ribosomal subunit. The N-terminus interacts with L11 and the large rRNA to form the base of the stalk. The C-terminus forms an elongated spine to which L12 dimers bind in a sequential fashion forming a multimeric L10(L12)X complex.

Its function is as follows. Forms part of the ribosomal stalk, playing a central role in the interaction of the ribosome with GTP-bound translation factors. The polypeptide is Large ribosomal subunit protein uL10 (Prochlorococcus marinus (strain AS9601)).